The sequence spans 400 residues: MGGWSSKPRKGMGTNLSVPNPLGFFPDHQLDPAFKANSENPDWDLNPHKDNWPDAHKVGVGAFGPGFTPPHGGLLGWSPQAQGILTSVPAAPPPASTNRQSGRQPTPLSPPLRDTHPQAMQWNSTTFHQTLQDPRVRALYLPAGGSSSGTVSPAQNTVSAISSILSTTGDPVPNMENIASGLLGPLLVLQAGFFSLTKILTIPQSLDSWWTSLSFLGGTPVCLGQNSQSPISSHSPTCCPPICPGYRWMYLRRFIIXLCILLLCLIFLLVLLDYQGMLPVCPLIPGSSTTSTGPCKTCTTPAQGTSMFPSCCCTKPTDGNCTCIPIPSSWAFAKYLWEWASVRFSWLSLLVPFVQWFVGLSPTVWLSVIWMMWYWGPSLYNILSPFMPLLPIFFCLWVYI.

Met1 is subject to N-acetylmethionine. 2 disordered regions span residues Met1–Asp50 and Ile84–His116. Residue Gly2 is the site of N-myristoyl glycine; by host attachment. The pre-S1 stretch occupies residues Gly2–Ala119. A pre-S region spans residues Gly2 to Asn174. The Virion surface; in external conformation segment spans residues Gly2–Gly181. The Intravirion; in internal conformation segment spans residues Gly2–Arg253. N-linked (GlcNAc...) asparagine glycosylation is present at Trp4. Residues Ser96–Thr106 are compositionally biased toward polar residues. Residues Met120–Asn174 form a pre-S2 region. Residues Leu182–Ile202 traverse the membrane as a helical segment. Residues Pro203–Arg253 are Intravirion; in external conformation-facing. The chain crosses the membrane as a helical span at residues Phe254–Tyr274. At Gln275–Ser348 the chain is on the virion surface side. Asn320 carries N-linked (GlcNAc...) asparagine; by host glycosylation. Residues Leu349–Ile369 traverse the membrane as a helical segment. The Intravirion portion of the chain corresponds to Trp370–Trp375. A helical transmembrane segment spans residues Gly376–Val398. At Tyr399–Ile400 the chain is on the virion surface side.

It belongs to the orthohepadnavirus major surface antigen family. In terms of assembly, interacts (via its myristoylated pre-S1 region) with the host SLC10A1/NTCP; this interaction is essential for viral entry. In its internal form (Li-HBsAg), interacts with the capsid protein and with the isoform S. Interacts with host chaperone CANX. As to quaternary structure, associates with host chaperone CANX through its pre-S2 N glycan; this association may be essential for isoform M proper secretion. In terms of assembly, interacts with isoform L. Interacts with the antigens of satellite virus HDV (HDVAgs); this interaction is required for encapsidation of HDV genomic RNA. Isoform M is N-terminally acetylated by host at a ratio of 90%, and N-glycosylated by host at the pre-S2 region. Post-translationally, myristoylated; this modification is essential for its interaction with the host protein SLC10A1/NTCP.

The protein resides in the virion membrane. The large envelope protein exists in two topological conformations, one which is termed 'external' or Le-HBsAg and the other 'internal' or Li-HBsAg. In its external conformation the protein attaches the virus to cell receptors and thereby initiating infection. This interaction determines the species specificity and liver tropism. This attachment induces virion internalization predominantly through caveolin-mediated endocytosis. The large envelope protein also assures fusion between virion membrane and endosomal membrane. In its internal conformation the protein plays a role in virion morphogenesis and mediates the contact with the nucleocapsid like a matrix protein. Its function is as follows. The middle envelope protein plays an important role in the budding of the virion. It is involved in the induction of budding in a nucleocapsid independent way. In this process the majority of envelope proteins bud to form subviral lipoprotein particles of 22 nm of diameter that do not contain a nucleocapsid. The protein is Large envelope protein of Hepatitis B virus genotype B1 (isolate Japan/Ry30/2002) (HBV-B).